Here is a 360-residue protein sequence, read N- to C-terminus: Isopentenyl-diphosphate delta-isomerase (360 aa).

Arginine 12–lysine 13 contributes to the substrate binding site. FMN is bound by residues serine 69–threonine 71, serine 99, and asparagine 130. Serine 99 to arginine 101 is a binding site for substrate. A substrate-binding site is contributed by glutamine 164. A Mg(2+)-binding site is contributed by glutamate 165. Residues lysine 196, threonine 226, glycine 277–arginine 279, and alanine 298–lysine 299 contribute to the FMN site.

Belongs to the IPP isomerase type 2 family. Homooctamer. Dimer of tetramers. It depends on FMN as a cofactor. NADPH is required as a cofactor. The cofactor is Mg(2+).

The protein localises to the cytoplasm. The enzyme catalyses isopentenyl diphosphate = dimethylallyl diphosphate. Functionally, involved in the biosynthesis of isoprenoids. Catalyzes the 1,3-allylic rearrangement of the homoallylic substrate isopentenyl (IPP) to its allylic isomer, dimethylallyl diphosphate (DMAPP). The sequence is that of Isopentenyl-diphosphate delta-isomerase from Halobacterium salinarum (strain ATCC 700922 / JCM 11081 / NRC-1) (Halobacterium halobium).